Consider the following 295-residue polypeptide: Protein SSO2 (295 aa).

Residues 1–269 lie on the Cytoplasmic side of the membrane; that stretch reads MSNANPYENN…ARKARKNKIR (269 aa). Ser-31 and Ser-34 each carry phosphoserine. Residues 39 to 100 adopt a coiled-coil conformation; it reads AFMNKINSIN…ATDLQYQLKA (62 aa). The t-SNARE coiled-coil homology domain occupies 194-256; the sequence is LAEVQARHQE…EQGVGHTNKA (63 aa). The chain crosses the membrane as a helical; Anchor for type IV membrane protein span at residues 270-291; that stretch reads CLIICFIIFAIVVVVVVVPSVV. The Extracellular portion of the chain corresponds to 292–295; sequence ETRK.

Belongs to the syntaxin family.

It is found in the membrane. Its function is as follows. Required for vesicle fusion with the plasma membrane. This Saccharomyces cerevisiae (strain ATCC 204508 / S288c) (Baker's yeast) protein is Protein SSO2 (SSO2).